Here is a 132-residue protein sequence, read N- to C-terminus: Fatty acid-binding protein 12 (132 aa).

Residues Arg-107 and 127-129 (RTY) contribute to the a fatty acid site.

Belongs to the calycin superfamily. Fatty-acid binding protein (FABP) family. In terms of tissue distribution, highly expressed in adult retina and testis.

In terms of biological role, may play a role in lipid transport. This is Fatty acid-binding protein 12 (Fabp12) from Mus musculus (Mouse).